A 122-amino-acid chain; its full sequence is Large ribosomal subunit protein uL18 (122 aa).

It belongs to the universal ribosomal protein uL18 family. As to quaternary structure, part of the 50S ribosomal subunit; part of the 5S rRNA/L5/L18/L25 subcomplex. Contacts the 5S and 23S rRNAs.

Its function is as follows. This is one of the proteins that bind and probably mediate the attachment of the 5S RNA into the large ribosomal subunit, where it forms part of the central protuberance. The protein is Large ribosomal subunit protein uL18 of Thermosipho africanus (strain TCF52B).